We begin with the raw amino-acid sequence, 508 residues long: Probable glycine dehydrogenase (decarboxylating) subunit 2 (508 aa).

Lysine 277 is subject to N6-(pyridoxal phosphate)lysine.

Belongs to the GcvP family. C-terminal subunit subfamily. The glycine cleavage system is composed of four proteins: P, T, L and H. In this organism, the P 'protein' is a heterodimer of two subunits. Pyridoxal 5'-phosphate is required as a cofactor.

The enzyme catalyses N(6)-[(R)-lipoyl]-L-lysyl-[glycine-cleavage complex H protein] + glycine + H(+) = N(6)-[(R)-S(8)-aminomethyldihydrolipoyl]-L-lysyl-[glycine-cleavage complex H protein] + CO2. Its function is as follows. The glycine cleavage system catalyzes the degradation of glycine. The P protein binds the alpha-amino group of glycine through its pyridoxal phosphate cofactor; CO(2) is released and the remaining methylamine moiety is then transferred to the lipoamide cofactor of the H protein. The polypeptide is Probable glycine dehydrogenase (decarboxylating) subunit 2 (Saccharolobus solfataricus (strain ATCC 35092 / DSM 1617 / JCM 11322 / P2) (Sulfolobus solfataricus)).